The following is a 269-amino-acid chain: Shikimate dehydrogenase (NADP(+)) (269 aa).

Shikimate-binding positions include 19-21 and Thr66; that span reads SLS. The active-site Proton acceptor is Lys70. Asp82 contacts NADP(+). Shikimate contacts are provided by Asn91 and Asp106. NADP(+)-binding positions include 130–134, 153–158, and Ile214; these read GAGGA and NRTKEK. Tyr216 is a shikimate binding site. Gly235 lines the NADP(+) pocket. Position 242 (Gln242) interacts with shikimate.

It belongs to the shikimate dehydrogenase family. As to quaternary structure, homodimer.

The catalysed reaction is shikimate + NADP(+) = 3-dehydroshikimate + NADPH + H(+). Its pathway is metabolic intermediate biosynthesis; chorismate biosynthesis; chorismate from D-erythrose 4-phosphate and phosphoenolpyruvate: step 4/7. Functionally, involved in the biosynthesis of the chorismate, which leads to the biosynthesis of aromatic amino acids. Catalyzes the reversible NADPH linked reduction of 3-dehydroshikimate (DHSA) to yield shikimate (SA). This is Shikimate dehydrogenase (NADP(+)) from Aquifex aeolicus (strain VF5).